Reading from the N-terminus, the 114-residue chain is Large ribosomal subunit protein bL19 (114 aa).

This sequence belongs to the bacterial ribosomal protein bL19 family.

In terms of biological role, this protein is located at the 30S-50S ribosomal subunit interface and may play a role in the structure and function of the aminoacyl-tRNA binding site. The protein is Large ribosomal subunit protein bL19 of Acetivibrio thermocellus (strain ATCC 27405 / DSM 1237 / JCM 9322 / NBRC 103400 / NCIMB 10682 / NRRL B-4536 / VPI 7372) (Clostridium thermocellum).